Consider the following 324-residue polypeptide: Glyoxylate/hydroxypyruvate reductase B (324 aa).

Catalysis depends on residues Arg237 and Glu266. His285 serves as the catalytic Proton donor.

It belongs to the D-isomer specific 2-hydroxyacid dehydrogenase family. GhrB subfamily. As to quaternary structure, homodimer.

It is found in the cytoplasm. It carries out the reaction glycolate + NADP(+) = glyoxylate + NADPH + H(+). The enzyme catalyses (R)-glycerate + NAD(+) = 3-hydroxypyruvate + NADH + H(+). It catalyses the reaction (R)-glycerate + NADP(+) = 3-hydroxypyruvate + NADPH + H(+). Functionally, catalyzes the NADPH-dependent reduction of glyoxylate and hydroxypyruvate into glycolate and glycerate, respectively. This Escherichia coli (strain SMS-3-5 / SECEC) protein is Glyoxylate/hydroxypyruvate reductase B.